Reading from the N-terminus, the 354-residue chain is Uroporphyrinogen decarboxylase (354 aa).

Residues 27–31 (RQAGR), aspartate 77, tyrosine 154, threonine 209, and histidine 327 contribute to the substrate site.

The protein belongs to the uroporphyrinogen decarboxylase family. In terms of assembly, homodimer.

It localises to the cytoplasm. The catalysed reaction is uroporphyrinogen III + 4 H(+) = coproporphyrinogen III + 4 CO2. Its pathway is porphyrin-containing compound metabolism; protoporphyrin-IX biosynthesis; coproporphyrinogen-III from 5-aminolevulinate: step 4/4. Its function is as follows. Catalyzes the decarboxylation of four acetate groups of uroporphyrinogen-III to yield coproporphyrinogen-III. The chain is Uroporphyrinogen decarboxylase from Histophilus somni (strain 2336) (Haemophilus somnus).